A 59-amino-acid polypeptide reads, in one-letter code: Large ribosomal subunit protein eL37 (59 aa).

Zn(2+) is bound by residues C20, C23, C35, and C38. The C4-type zinc finger occupies 20 to 38 (CRRCGRHSFHRRKGYCAAC).

It belongs to the eukaryotic ribosomal protein eL37 family. Requires Zn(2+) as cofactor.

In terms of biological role, binds to the 23S rRNA. The protein is Large ribosomal subunit protein eL37 (rpl37e) of Archaeoglobus fulgidus (strain ATCC 49558 / DSM 4304 / JCM 9628 / NBRC 100126 / VC-16).